A 482-amino-acid chain; its full sequence is Lipoamide acyltransferase component of branched-chain alpha-keto acid dehydrogenase complex, mitochondrial (482 aa).

A mitochondrion-targeting transit peptide spans 1-61 (MAAARVLRTW…HSLRTAAVLQ (61 aa)). One can recognise a Lipoyl-binding domain in the interval 64–139 (VVQFKLSDIG…YVGKPLIDIE (76 aa)). Lys105 carries the N6-lipoyllysine modification. Lys133 is subject to N6-succinyllysine. The segment at 145–160 (DSEEDVVETPAVSHDE) is critical for association with PPM1K. The region spanning 172–209 (LATPAVRRLAMENNIKLSEVVGSGKDGRILKEDILSFL) is the Peripheral subunit-binding (PSBD) domain. Lys196 carries the N6-acetyllysine; alternate modification. Lys196 carries the post-translational modification N6-succinyllysine; alternate. Lys202 is subject to N6-acetyllysine. Positions 217–252 (LPPSPKSEITPPPPQPKDRTFPTPIAKPPVFTGKDR) are disordered. The span at 218–231 (PPSPKSEITPPPPQ) shows a compositional bias: pro residues. Residue Ser220 is modified to Phosphoserine. 2 positions are modified to N6-acetyllysine: Lys243 and Lys250. Lys261 bears the N6-succinyllysine mark. Lys289 carries the post-translational modification N6-acetyllysine; alternate. Lys289 carries the post-translational modification N6-succinyllysine; alternate. Residue Arg291 coordinates CoA. 2 positions are modified to N6-acetyllysine: Lys295 and Lys304. Residues Ser306, Asp349, Gln378, Ser399, Asn400, Ser403, Gly424, and Ile426 each coordinate CoA. An N6-acetyllysine modification is found at Lys435. The residue at position 440 (Lys440) is an N6-acetyllysine; alternate. The residue at position 440 (Lys440) is an N6-succinyllysine; alternate. Active-site residues include His452 and Asp456.

It belongs to the 2-oxoacid dehydrogenase family. In terms of assembly, forms a 24-polypeptide structural core with octahedral symmetry that represents the E2 component of the branched-chain alpha-ketoacid dehydrogenase (BCKDH) complex. The BCKDH complex is composed of three major building blocks E1, E2 and E3. It is organized around E2, a 24-meric cubic core composed of DBT, to which are associated 6 to 12 copies of E1, and approximately 6 copies of the dehydrogenase E3, a DLD dimer. Interacts with PPM1K with a 24:1 stoichiometry; the N-terminal region (residues 49-61) of PPM1K and C-terminal linker of the lipoyl domain of DBT/E2 (residues 145-160) are critical for this interaction whereas the lipoyl prosthetic group is dispensable. This interaction requires colocalization in mitochondria. PPM1K competes with BCKDK for binding to DBT; this interaction is modulated by branched-chain alpha-keto acids (BCKAs). At steady state, BCKDH holoenzyme preferentially binds BCKDK and BCKDHA is phosphorylated. In response to high levels of BCKAs, BCKDK is replaced by PPM1K leading to BCKDHA dephosphorylation. Requires (R)-lipoate as cofactor.

It is found in the mitochondrion matrix. The enzyme catalyses N(6)-[(R)-dihydrolipoyl]-L-lysyl-[protein] + 2-methylpropanoyl-CoA = N(6)-[(R)-S(8)-2-methylpropanoyldihydrolipoyl]-L-lysyl-[protein] + CoA. In terms of biological role, the branched-chain alpha-keto dehydrogenase complex catalyzes the overall conversion of alpha-keto acids to acyl-CoA and CO(2). It contains multiple copies of three enzymatic components: branched-chain alpha-keto acid decarboxylase (E1), lipoamide acyltransferase (E2) and lipoamide dehydrogenase (E3). Within this complex, the catalytic function of this enzyme is to accept, and to transfer to coenzyme A, acyl groups that are generated by the branched-chain alpha-keto acid decarboxylase component. The sequence is that of Lipoamide acyltransferase component of branched-chain alpha-keto acid dehydrogenase complex, mitochondrial (Dbt) from Mus musculus (Mouse).